We begin with the raw amino-acid sequence, 113 residues long: MSSKLPKKSEENLELPTFPASEESLSRSEKLKYVFVRNPFIPLGCLMTVGTFLASGYYIRRENHLMANKFMRYRVMSQGFTLAALAFSVLFIGPPRREAPSNSSGSINSEIKK.

Residues 1–27 form a disordered region; it reads MSSKLPKKSEENLELPTFPASEESLSR. An HIG1 domain is found at 12 to 103; sequence NLELPTFPAS…PPRREAPSNS (92 aa). Transmembrane regions (helical) follow at residues 39-59 and 75-95; these read PFIP…GYYI and VMSQ…IGPP.

The protein localises to the mitochondrion membrane. The sequence is that of HIG1 domain-containing protein C25B8.07c, mitochondrial from Schizosaccharomyces pombe (strain 972 / ATCC 24843) (Fission yeast).